Consider the following 133-residue polypeptide: p53 and DNA damage-regulated protein 1 (133 aa).

The protein belongs to the prefoldin subunit beta family. Component of the PAQosome complex which is responsible for the biogenesis of several protein complexes and which consists of R2TP complex members RUVBL1, RUVBL2, RPAP3 and PIH1D1, URI complex members PFDN2, PFDN6, PDRG1, UXT and URI1 as well as ASDURF, POLR2E and DNAAF10/WDR92.

The protein localises to the cytoplasm. Its function is as follows. May play a role in chaperone-mediated protein folding. This chain is p53 and DNA damage-regulated protein 1 (PDRG1), found in Bos taurus (Bovine).